Consider the following 325-residue polypeptide: Helicase VP6-A (325 aa).

2 disordered regions span residues 1–127 (MLLA…NGRR) and 174–230 (EGVA…EPAR). Composition is skewed to basic and acidic residues over residues 8-18 (VIKRSSEELKQ), 32-54 (EGGKENKTEPKEESKAEGSKDGE), 61-79 (GQKEEGGKETKDADVDRRI), and 92-105 (PGERANENADRGDG). K106 provides a ligand contact to ATP. Residues 106 to 122 (KVGGGGGDADAGVGATG) are compositionally biased toward gly residues. The segment covering 175–229 (GVAEQTERSRDLRRKEKNGTHAKAVERGGRKQRKESHGDAQREGVEEEKTSEEPA) has biased composition (basic and acidic residues).

It belongs to the orbivirus VP6 family. Homohexamer.

The protein localises to the virion. It catalyses the reaction ATP + H2O = ADP + phosphate + H(+). Functionally, ATP dependent RNA helicase essential for RNA packaging and viral transcription. Possesses ss- and dsRNA-binding capacity. This Bluetongue virus 13 (isolate USA) (BTV 13) protein is Helicase VP6-A (Segment-9).